Reading from the N-terminus, the 244-residue chain is 7-cyano-7-deazaguanine synthase (244 aa).

14-24 (FSGGQDSATCL) is a binding site for ATP. Residues Cys-202, Cys-217, Cys-220, and Cys-223 each contribute to the Zn(2+) site.

It belongs to the QueC family. It depends on Zn(2+) as a cofactor.

The enzyme catalyses 7-carboxy-7-deazaguanine + NH4(+) + ATP = 7-cyano-7-deazaguanine + ADP + phosphate + H2O + H(+). It participates in purine metabolism; 7-cyano-7-deazaguanine biosynthesis. Functionally, catalyzes the ATP-dependent conversion of 7-carboxy-7-deazaguanine (CDG) to 7-cyano-7-deazaguanine (preQ(0)). This is 7-cyano-7-deazaguanine synthase from Paraburkholderia phytofirmans (strain DSM 17436 / LMG 22146 / PsJN) (Burkholderia phytofirmans).